A 304-amino-acid chain; its full sequence is UDP-3-O-acyl-N-acetylglucosamine deacetylase (304 aa).

3 residues coordinate Zn(2+): His78, His237, and Asp241. Residue His264 is the Proton donor of the active site.

Belongs to the LpxC family. Zn(2+) is required as a cofactor.

The catalysed reaction is a UDP-3-O-[(3R)-3-hydroxyacyl]-N-acetyl-alpha-D-glucosamine + H2O = a UDP-3-O-[(3R)-3-hydroxyacyl]-alpha-D-glucosamine + acetate. It functions in the pathway glycolipid biosynthesis; lipid IV(A) biosynthesis; lipid IV(A) from (3R)-3-hydroxytetradecanoyl-[acyl-carrier-protein] and UDP-N-acetyl-alpha-D-glucosamine: step 2/6. Its function is as follows. Catalyzes the hydrolysis of UDP-3-O-myristoyl-N-acetylglucosamine to form UDP-3-O-myristoylglucosamine and acetate, the committed step in lipid A biosynthesis. In Marinobacter nauticus (strain ATCC 700491 / DSM 11845 / VT8) (Marinobacter aquaeolei), this protein is UDP-3-O-acyl-N-acetylglucosamine deacetylase.